Here is a 229-residue protein sequence, read N- to C-terminus: DNA repair protein RecO (229 aa).

Belongs to the RecO family.

In terms of biological role, involved in DNA repair and RecF pathway recombination. This is DNA repair protein RecO from Legionella pneumophila (strain Corby).